Consider the following 136-residue polypeptide: Small ribosomal subunit protein bS16 (136 aa).

Basic residues predominate over residues 113–122; the sequence is LALKSHRRSA. The tract at residues 113-136 is disordered; sequence LALKSHRRSAKKEAEAKAATGGEA.

Belongs to the bacterial ribosomal protein bS16 family.

The chain is Small ribosomal subunit protein bS16 from Pelodictyon phaeoclathratiforme (strain DSM 5477 / BU-1).